Reading from the N-terminus, the 628-residue chain is Hemocyanin II (628 aa).

T1 bears the Blocked amino end (Thr); partial mark. The Cu cation site is built by H173, H177, H204, H324, H328, and H364. A glycan (N-linked (GlcNAc...) asparagine) is linked at N449. 2 disulfide bridges follow: C534–C576 and C536–C583.

It belongs to the tyrosinase family. Hemocyanin subfamily. As to quaternary structure, hexamer or a multiple thereof. As to expression, hemolymph.

The protein localises to the secreted. The protein resides in the extracellular space. Its function is as follows. Hemocyanins are copper-containing oxygen carriers occurring freely dissolved in the hemolymph of many mollusks and arthropods. This is Hemocyanin II from Limulus polyphemus (Atlantic horseshoe crab).